The chain runs to 361 residues: P2Y purinoceptor 4 (361 aa).

The Extracellular portion of the chain corresponds to 1 to 30 (MTSADSLLFTSLGPSPSSGDGDCKFNEEFK). A helical transmembrane segment spans residues 31-58 (FILLPLSYAVVFVLGLALNAPTLWLFLF). Topologically, residues 59 to 68 (RLRPWDATAT) are cytoplasmic. A helical transmembrane segment spans residues 69-91 (YMFHLALSDTLYVLSLPTLVYYY). Topologically, residues 92-108 (AARNHWPFGTGFCKFVR) are extracellular. C104 and C181 are joined by a disulfide. Residues 109 to 127 (FLFYWNLYCSVLFLTCISV) form a helical membrane-spanning segment. The Cytoplasmic portion of the chain corresponds to 128 to 149 (HRYMGICHPLRAIRWGRPRFAG). A helical membrane pass occupies residues 150–170 (LLCLGVWLVVAGCLVPNLFFV). The Extracellular segment spans residues 171–192 (TTNANGTTILCHDTTLPEEFDH). A glycan (N-linked (GlcNAc...) asparagine) is linked at N175. Residues 193-218 (YVYFSSTIMVLLFGFPFLITLVCYGL) traverse the membrane as a helical segment. Over 219-242 (MARRLYRPLPGAGQSSSRLRSLRT) the chain is Cytoplasmic. Residues 243-265 (IAVVLTVFAVCFVPFHITRTIYY) form a helical membrane-spanning segment. Residues 266 to 283 (LARLLNAECRVLNIVNVV) are Extracellular-facing. A helical membrane pass occupies residues 284-305 (YKVTRPLASANSCLDPVLYLFT). Topologically, residues 306-361 (GDKYRNQLQQLCRGSTPKRRTTASSLALVTLHEESISRWADIHQDSIFPAYEGDRL) are cytoplasmic.

Belongs to the G-protein coupled receptor 1 family. Post-translationally, phosphorylation of Ser-329 and Ser-330 is a key step in agonist-dependent desensitization and loss of surface P2RY4. This phosphorylation does not involve PKC, nor other calcium-activated kinases. Expressed in the liver, intestine, stomach, bladder and lung.

The protein resides in the cell membrane. Its function is as follows. Receptor for ATP and UTP coupled to G-proteins that activate a phosphatidylinositol-calcium second messenger system. In Mus musculus (Mouse), this protein is P2Y purinoceptor 4 (P2ry4).